The chain runs to 186 residues: Lipid A palmitoyltransferase PagP (186 aa).

The N-terminal stretch at 1 to 25 (MNVSKYVAIFFFVFIQLISVGKVFA) is a signal peptide. Residues histidine 58, aspartate 101, and serine 102 contribute to the active site.

This sequence belongs to the lipid A palmitoyltransferase family. In terms of assembly, homodimer.

Its subcellular location is the cell outer membrane. The enzyme catalyses lipid A (E. coli) + a 1-hexadecanoyl-2-acyl-sn-glycero-3-phosphocholine = hepta-acyl lipid A (E. coli) + a 2-acyl-sn-glycero-3-phosphocholine. It catalyses the reaction lipid IIA + a 1-hexadecanoyl-2-acyl-sn-glycero-3-phosphocholine = lipid IIB + a 2-acyl-sn-glycero-3-phosphocholine. It carries out the reaction lipid IVA (E. coli) + a 1-hexadecanoyl-2-acyl-sn-glycero-3-phosphocholine = lipid IVB (E. coli) + a 2-acyl-sn-glycero-3-phosphocholine. Functionally, transfers a palmitate residue from the sn-1 position of a phospholipid to the N-linked hydroxymyristate on the proximal unit of lipid A or its precursors. The protein is Lipid A palmitoyltransferase PagP of Escherichia coli O6:H1 (strain CFT073 / ATCC 700928 / UPEC).